The sequence spans 716 residues: ATP-dependent DNA helicase DinG (716 aa).

One can recognise a Helicase ATP-binding domain in the interval 17–294; the sequence is ALQEQIPDFI…TCMEQFRPKT (278 aa). Position 54-61 (54-61) interacts with ATP; it reads APTGVGKT. Position 120 (cysteine 120) interacts with [4Fe-4S] cluster. A DEAH box motif is present at residues 131 to 134; that stretch reads EPTQ. Positions 194, 199, and 205 each coordinate [4Fe-4S] cluster. The short motif at 248-251 is the DEAH box element; it reads DEGH. The Helicase C-terminal domain maps to 517–698; it reads HIAEMAAFFR…VFPIEQPEVP (182 aa).

It belongs to the helicase family. DinG subfamily. Type 1 sub-subfamily. [4Fe-4S] cluster serves as cofactor.

The enzyme catalyses Couples ATP hydrolysis with the unwinding of duplex DNA at the replication fork by translocating in the 5'-3' direction. This creates two antiparallel DNA single strands (ssDNA). The leading ssDNA polymer is the template for DNA polymerase III holoenzyme which synthesizes a continuous strand.. It carries out the reaction ATP + H2O = ADP + phosphate + H(+). DNA-dependent ATPase and 5'-3' DNA helicase. Unwinds D-loops, R-loops, forked DNA and G-quadruplex DNA. This chain is ATP-dependent DNA helicase DinG, found in Escherichia coli O6:H1 (strain CFT073 / ATCC 700928 / UPEC).